The primary structure comprises 143 residues: Transcriptional regulator MraZ (143 aa).

SpoVT-AbrB domains follow at residues 5-47 (EFQH…TLTE) and 76-119 (AVEV…DRKL).

It belongs to the MraZ family. As to quaternary structure, forms oligomers.

The protein resides in the cytoplasm. Its subcellular location is the nucleoid. The sequence is that of Transcriptional regulator MraZ from Macrococcus caseolyticus (strain JCSC5402) (Macrococcoides caseolyticum).